The primary structure comprises 372 residues: Glutamine synthetase (372 aa).

The region spanning 24-103 (VIAEYVWVDG…VLAECFNSDG (80 aa)) is the GS beta-grasp domain. The GS catalytic domain maps to 110-372 (HRHEANKLFQ…KEYERETNEQ (263 aa)).

Belongs to the glutamine synthetase family. As to quaternary structure, homooctamer.

It localises to the cytoplasm. The enzyme catalyses L-glutamate + NH4(+) + ATP = L-glutamine + ADP + phosphate + H(+). In Candida glabrata (strain ATCC 2001 / BCRC 20586 / JCM 3761 / NBRC 0622 / NRRL Y-65 / CBS 138) (Yeast), this protein is Glutamine synthetase (GLN1).